Consider the following 455-residue polypeptide: Ribulose bisphosphate carboxylase large chain (455 aa).

Position 5 is an N6,N6,N6-trimethyllysine (Lys5). Positions 114 and 164 each coordinate substrate. Lys166 serves as the catalytic Proton acceptor. A substrate-binding site is contributed by Lys168. Mg(2+)-binding residues include Lys192, Asp194, and Glu195. The residue at position 192 (Lys192) is an N6-carboxylysine. The active-site Proton acceptor is the His285. Substrate contacts are provided by Arg286, His318, and Ser370.

The protein belongs to the RuBisCO large chain family. Type I subfamily. As to quaternary structure, heterohexadecamer of 8 large chains and 8 small chains. It depends on Mg(2+) as a cofactor.

The protein localises to the plastid. The protein resides in the chloroplast. The catalysed reaction is 2 (2R)-3-phosphoglycerate + 2 H(+) = D-ribulose 1,5-bisphosphate + CO2 + H2O. It carries out the reaction D-ribulose 1,5-bisphosphate + O2 = 2-phosphoglycolate + (2R)-3-phosphoglycerate + 2 H(+). In terms of biological role, ruBisCO catalyzes two reactions: the carboxylation of D-ribulose 1,5-bisphosphate, the primary event in carbon dioxide fixation, as well as the oxidative fragmentation of the pentose substrate in the photorespiration process. Both reactions occur simultaneously and in competition at the same active site. In Tamarindus indica (Tamarind), this protein is Ribulose bisphosphate carboxylase large chain.